The sequence spans 190 residues: dCTP deaminase (190 aa).

Position 107 to 112 (107 to 112 (KSTYAR)) interacts with dCTP. Catalysis depends on glutamate 133, which acts as the Proton donor/acceptor. DCTP is bound by residues glutamine 152, tyrosine 166, and glutamine 176.

The protein belongs to the dCTP deaminase family. As to quaternary structure, homotrimer.

The catalysed reaction is dCTP + H2O + H(+) = dUTP + NH4(+). Its pathway is pyrimidine metabolism; dUMP biosynthesis; dUMP from dCTP (dUTP route): step 1/2. Its function is as follows. Catalyzes the deamination of dCTP to dUTP. In Campylobacter hominis (strain ATCC BAA-381 / DSM 21671 / CCUG 45161 / LMG 19568 / NCTC 13146 / CH001A), this protein is dCTP deaminase.